The primary structure comprises 408 residues: Prenyltransferase criF (408 aa).

Positions 94, 181, 183, 248, 250, 252, 334, 336, 400, and 404 each coordinate dimethylallyl diphosphate.

The protein belongs to the tryptophan dimethylallyltransferase family. In terms of assembly, homodimer.

It catalyses the reaction preechinulin + dimethylallyl diphosphate = tardioxopiperazine B + diphosphate. The catalysed reaction is preechinulin + dimethylallyl diphosphate = tardioxopiperazine A + diphosphate. The enzyme catalyses tardioxopiperazine A + dimethylallyl diphosphate = echinulin + diphosphate. It carries out the reaction tardioxopiperazine A + dimethylallyl diphosphate = variecolorin L + diphosphate. It catalyses the reaction neoechinulin A + dimethylallyl diphosphate = variecolorin G + diphosphate. The catalysed reaction is neoechinulin A + dimethylallyl diphosphate = isoechinulin A + diphosphate. The enzyme catalyses isoechinulin A + dimethylallyl diphosphate = dehydroechinulin + diphosphate. It carries out the reaction neoechinulin B + dimethylallyl diphosphate = isoechinulin B + diphosphate. The protein operates within secondary metabolite biosynthesis. Its pathway is alkaloid biosynthesis. Its function is as follows. Prenyltransferase; part of the gene cluster that mediates the biosynthesis of echinulin family alkaloid. The pathway begins with the biosynthesis of the cyclic dipeptide cyclo-L-Trp-L-Ala (cyclo-TA) by the NRPS criC via condensation of L-alanine and L-tryptophan. The prenyltransferase criA then catalyzes the first prenylation step, a reverse prenylation reaction at C2, to yield preechinulin. Preechinulin is the substrate of the cytochrome P450 monooxygenase criE that catalyzes the formation of the double bond between C10 and C11 to produce neoechulin A. The unique prenyltransferase criF functions as a competitive enzyme with criE for preechinulin metabolization and uses preechinulin for effective regiospecific prenylations. Preechinulin is prenylated by criF at C5 or C7. C7-prenylation leads to accumulation of tardioxopiperazine B without further modification by criF. In contrast, the C5-prenylated tardioxopiperazine A can be prenylated again by criF, predominantly at C7 to form echinulin or less frequently at C4 to give variecolorin L. CriF also accepts neoechilunin A to produce varlecolorin G (prenylation at C5) or isoechinulin A (prenylation at C7). CriF further converts isoechinulin A into dehydroechinulin. Moreover, a yet unidentified enzyme can also convert neoechilunin A into neoechilunin B by introducing a double bond between positions C14 and C17 and thus provides a further substrate to criF for C5 and C7 prenylation. In Aspergillus cristatus (Chinese Fuzhuan brick tea-fermentation fungus), this protein is Prenyltransferase criF.